Reading from the N-terminus, the 556-residue chain is Genetic interactor of prohibitins 3, mitochondrial (556 aa).

Residues 1–21 (MLNLCHALRGVRQFSCSVIVK) constitute a mitochondrion transit peptide. Positions 113–305 (ESTLNDILNY…LFDLPGYSTS (193 aa)) constitute a CP-type G domain.

It belongs to the TRAFAC class YlqF/YawG GTPase family. GEP3 subfamily.

The protein localises to the mitochondrion. Interacts genetically with prohibitins and thus may be involved in the mitochondrial lipid metabolism. The chain is Genetic interactor of prohibitins 3, mitochondrial (GEP3) from Saccharomyces cerevisiae (strain Zymaflore VL3) (Baker's yeast).